The following is a 390-amino-acid chain: GTPase Obg (390 aa).

In terms of domain architecture, Obg spans 1–159; it reads MKFIDEALIR…RDLQLELMLL (159 aa). The OBG-type G domain occupies 160–333; sequence ADVGMLGLPN…LCRDIMDFIE (174 aa). Residues 166–173, 191–195, 213–216, 283–286, and 314–316 contribute to the GTP site; these read GLPNAGKS, FTTLV, DIPG, NKID, and SAV. Positions 173 and 193 each coordinate Mg(2+). A disordered region spans residues 363–390; that stretch reads DHQFEDEDEDWDDWSEEDEEGVETIYKP. Acidic residues predominate over residues 366 to 384; it reads FEDEDEDWDDWSEEDEEGV.

It belongs to the TRAFAC class OBG-HflX-like GTPase superfamily. OBG GTPase family. Monomer. It depends on Mg(2+) as a cofactor.

Its subcellular location is the cytoplasm. An essential GTPase which binds GTP, GDP and possibly (p)ppGpp with moderate affinity, with high nucleotide exchange rates and a fairly low GTP hydrolysis rate. Plays a role in control of the cell cycle, stress response, ribosome biogenesis and in those bacteria that undergo differentiation, in morphogenesis control. The polypeptide is GTPase Obg (Pasteurella multocida (strain Pm70)).